Here is a 249-residue protein sequence, read N- to C-terminus: General transcription factor IIF subunit 2 (249 aa).

A2 is subject to N-acetylalanine. N6-acetyllysine is present on residues K22, K33, and K137. S142 carries the post-translational modification Phosphoserine. DNA contacts are provided by G227 and H229. At S248 the chain carries Phosphoserine.

Belongs to the TFIIF beta subunit family. In terms of assembly, heterodimer of an alpha and a beta subunit. Interacts with HTATSF1 and URI1. Interacts with GPBP1. Interacts with GTF2B (via N-terminus); this interaction is inhibited in presence of GTF2F1. Part of TBP-based Pol II pre-initiation complex (PIC), in which Pol II core assembles with general transcription factors and other specific initiation factors including GTF2E1, GTF2E2, GTF2F1, GTF2F2, TCEA1, ERCC2, ERCC3, GTF2H2, GTF2H3, GTF2H4, GTF2H5, GTF2A1, GTF2A2, GTF2B and TBP; this large multi-subunit PIC complex mediates DNA unwinding and targets Pol II core to the transcription start site where the first phosphodiester bond forms.

The protein localises to the nucleus. Its function is as follows. TFIIF is a general transcription initiation factor that binds to RNA polymerase II and helps to recruit it to the initiation complex in collaboration with TFIIB. The protein is General transcription factor IIF subunit 2 (Gtf2f2) of Mus musculus (Mouse).